The following is a 453-amino-acid chain: Bestrophin homolog 5 (453 aa).

4 helical membrane-spanning segments follow: residues 78 to 98 (ELIV…FALT), 113 to 133 (DARM…NIII), 275 to 295 (IPLM…FLCI), and 314 to 334 (LYIP…LKVA).

This sequence belongs to the anion channel-forming bestrophin (TC 1.A.46) family. Calcium-sensitive chloride channel subfamily. Forms oligomers.

The protein resides in the cell membrane. In terms of biological role, forms chloride channels. In Caenorhabditis elegans, this protein is Bestrophin homolog 5 (best-5).